Reading from the N-terminus, the 438-residue chain is Protein c-ets-1-A (438 aa).

Residues 49–134 form the PNT domain; the sequence is ATFSRFTKEQ…EHLEILQKDS (86 aa). The tract at residues 128–240 is activation domain; required for transcription activation; the sequence is EILQKDSKQY…DNMCLGRISR (113 aa). The tract at residues 301–309 is helix HI-1; that stretch reads FKDYVRDRA. A helix HI-2 region spans residues 320-327; the sequence is AAALAGYT. Residues 332–412 constitute a DNA-binding region (ETS); that stretch reads IQLWQFLLEL…AGKRYVYRFV (81 aa). The interval 415-419 is helix H4; the sequence is LQSLL. Residues 423–429 are helix H5; it reads PEELHAM.

This sequence belongs to the ETS family. Binds DNA as a homodimer; homodimerization is required for transcription activation.

Its subcellular location is the nucleus. It localises to the cytoplasm. Autoinhibited by a module composed of four alpha helices (HI-1, HI-2, H4, and H5) that flank the DNA-binding ETS domain, reducing the affinity for DNA. Functionally, transcription factor. Directly controls the expression of cytokine and chemokine genes in a wide variety of different cellular contexts. In Xenopus laevis (African clawed frog), this protein is Protein c-ets-1-A (ets1-a).